A 318-amino-acid polypeptide reads, in one-letter code: Ribonuclease Z (318 aa).

7 residues coordinate Zn(2+): His62, His64, Asp66, His67, His140, Asp211, and His269. Catalysis depends on Asp66, which acts as the Proton acceptor.

The protein belongs to the RNase Z family. Homodimer. Zn(2+) is required as a cofactor.

It catalyses the reaction Endonucleolytic cleavage of RNA, removing extra 3' nucleotides from tRNA precursor, generating 3' termini of tRNAs. A 3'-hydroxy group is left at the tRNA terminus and a 5'-phosphoryl group is left at the trailer molecule.. In terms of biological role, zinc phosphodiesterase, which displays some tRNA 3'-processing endonuclease activity. Probably involved in tRNA maturation, by removing a 3'-trailer from precursor tRNA. The chain is Ribonuclease Z from Brevibacillus brevis (strain 47 / JCM 6285 / NBRC 100599).